The sequence spans 98 residues: uncharacterized protein (98 aa).

The N-terminal stretch at 1 to 23 (MKKMQSIVLALSLVLVAPMAAQA) is a signal peptide. The disordered stretch occupies residues 68–98 (WHLHGPPPPPRHHKKAPHDHHGGHGPGKHHR). The segment covering 77–98 (PRHHKKAPHDHHGGHGPGKHHR) has biased composition (basic residues).

This sequence to E.coli YpeC.

This is an uncharacterized protein from Escherichia coli (strain K12).